The chain runs to 209 residues: Ribonuclease HII (209 aa).

The RNase H type-2 domain occupies 19–208; sequence GLVAGVDEAG…VARALQAPVA (190 aa). A divalent metal cation-binding residues include Asp-25, Glu-26, and Asp-117.

This sequence belongs to the RNase HII family. Mn(2+) is required as a cofactor. The cofactor is Mg(2+).

Its subcellular location is the cytoplasm. The enzyme catalyses Endonucleolytic cleavage to 5'-phosphomonoester.. In terms of biological role, endonuclease that specifically degrades the RNA of RNA-DNA hybrids. The sequence is that of Ribonuclease HII from Acidovorax ebreus (strain TPSY) (Diaphorobacter sp. (strain TPSY)).